The sequence spans 70 residues: Conotoxin ArMKLT2-0112 (70 aa).

The first 22 residues, 1 to 22, serve as a signal peptide directing secretion; that stretch reads MKLTCVLIIAVLFLTACQLTTG. Positions 23-40 are excised as a propeptide; the sequence is EQKDHALRSTDKNSKLTR. Gln-41 is modified (pyrrolidone carboxylic acid). Cystine bridges form between Cys-42-Cys-56, Cys-49-Cys-60, and Cys-55-Cys-67.

It belongs to the conotoxin O1 superfamily. In terms of tissue distribution, expressed by the venom duct.

The protein localises to the secreted. In Conus arenatus (Sand-dusted cone), this protein is Conotoxin ArMKLT2-0112.